The chain runs to 245 residues: DNA polymerase sliding clamp (245 aa).

Belongs to the PCNA family. As to quaternary structure, homotrimer. The subunits circularize to form a toroid; DNA passes through its center. Replication factor C (RFC) is required to load the toroid on the DNA.

Sliding clamp subunit that acts as a moving platform for DNA processing. Responsible for tethering the catalytic subunit of DNA polymerase and other proteins to DNA during high-speed replication. The sequence is that of DNA polymerase sliding clamp from Archaeoglobus fulgidus (strain ATCC 49558 / DSM 4304 / JCM 9628 / NBRC 100126 / VC-16).